Reading from the N-terminus, the 175-residue chain is Peptide deformylase (175 aa).

Fe cation contacts are provided by Cys-96 and His-138. Glu-139 is a catalytic residue. His-142 serves as a coordination point for Fe cation.

The protein belongs to the polypeptide deformylase family. It depends on Fe(2+) as a cofactor.

The enzyme catalyses N-terminal N-formyl-L-methionyl-[peptide] + H2O = N-terminal L-methionyl-[peptide] + formate. In terms of biological role, removes the formyl group from the N-terminal Met of newly synthesized proteins. Requires at least a dipeptide for an efficient rate of reaction. N-terminal L-methionine is a prerequisite for activity but the enzyme has broad specificity at other positions. The polypeptide is Peptide deformylase (Campylobacter jejuni subsp. jejuni serotype O:2 (strain ATCC 700819 / NCTC 11168)).